We begin with the raw amino-acid sequence, 261 residues long: Probable pectin methylesterase CGR2 (261 aa).

At 1-35 (MARRQVGSTRRVGDGGSFPFAGALHSKSRSSPLLS) the chain is on the cytoplasmic side. Residues 36 to 56 (ICLVLVGACLLIGYAYSGPGI) traverse the membrane as a helical segment. The Lumenal segment spans residues 57 to 261 (FKSIKEVSKV…CQVFHLKPLH (205 aa)). N174 is a glycosylation site (N-linked (GlcNAc...) asparagine).

This sequence belongs to the class I-like SAM-binding methyltransferase superfamily.

It is found in the golgi apparatus membrane. Its function is as follows. Together with CGR3, required for homogalacturonan pectins (HG) methylesterification in the Golgi apparatus prior to integration into cell walls, essential for general growth and development. Promotes rosette growth. Impacts carbon (C) partitioning, photosynthesis and respiration efficiency by influencing leaf mesophyll cell walls morphology and physiology; pectin methylesterification modulates both expansion and positioning of cells in leaves, probably by changing cell walls plasticity. This is Probable pectin methylesterase CGR2 from Arabidopsis thaliana (Mouse-ear cress).